Here is a 102-residue protein sequence, read N- to C-terminus: Large ribosomal subunit protein bL21 (102 aa).

The protein belongs to the bacterial ribosomal protein bL21 family. In terms of assembly, part of the 50S ribosomal subunit. Contacts protein L20.

In terms of biological role, this protein binds to 23S rRNA in the presence of protein L20. This chain is Large ribosomal subunit protein bL21, found in Ehrlichia ruminantium (strain Welgevonden).